The primary structure comprises 263 residues: Endonuclease 8 (263 aa).

Residue proline 2 is the Schiff-base intermediate with DNA of the active site. Glutamate 3 (proton donor) is an active-site residue. Lysine 53 (proton donor; for beta-elimination activity) is an active-site residue. The DNA site is built by glutamine 70, arginine 125, and asparagine 169. Residues 229 to 263 (KVFHRDGELCERCGGIIEKTTLSSRPFYWCPGCQH) form an FPG-type zinc finger. Catalysis depends on arginine 253, which acts as the Proton donor; for delta-elimination activity.

This sequence belongs to the FPG family. Zn(2+) serves as cofactor.

The catalysed reaction is 2'-deoxyribonucleotide-(2'-deoxyribose 5'-phosphate)-2'-deoxyribonucleotide-DNA = a 3'-end 2'-deoxyribonucleotide-(2,3-dehydro-2,3-deoxyribose 5'-phosphate)-DNA + a 5'-end 5'-phospho-2'-deoxyribonucleoside-DNA + H(+). Involved in base excision repair of DNA damaged by oxidation or by mutagenic agents. Acts as a DNA glycosylase that recognizes and removes damaged bases. Has a preference for oxidized pyrimidines, such as thymine glycol, 5,6-dihydrouracil and 5,6-dihydrothymine. Has AP (apurinic/apyrimidinic) lyase activity and introduces nicks in the DNA strand. Cleaves the DNA backbone by beta-delta elimination to generate a single-strand break at the site of the removed base with both 3'- and 5'-phosphates. The sequence is that of Endonuclease 8 from Escherichia coli O7:K1 (strain IAI39 / ExPEC).